The following is a 196-amino-acid chain: Nucleoside triphosphate pyrophosphatase (196 aa).

The Proton acceptor role is filled by Asp-73.

It belongs to the Maf family. Requires a divalent metal cation as cofactor.

It is found in the cytoplasm. It catalyses the reaction a ribonucleoside 5'-triphosphate + H2O = a ribonucleoside 5'-phosphate + diphosphate + H(+). The enzyme catalyses a 2'-deoxyribonucleoside 5'-triphosphate + H2O = a 2'-deoxyribonucleoside 5'-phosphate + diphosphate + H(+). In terms of biological role, nucleoside triphosphate pyrophosphatase. May have a dual role in cell division arrest and in preventing the incorporation of modified nucleotides into cellular nucleic acids. This Maricaulis maris (strain MCS10) (Caulobacter maris) protein is Nucleoside triphosphate pyrophosphatase.